Consider the following 254-residue polypeptide: Phosphoglycerate mutase 1 (254 aa).

Substrate contacts are provided by residues arginine 10 to asparagine 17 and serine 23 to glycine 24. The active-site Tele-phosphohistidine intermediate is histidine 11. Residues serine 14 and serine 23 each carry the phosphoserine modification. Phosphotyrosine is present on tyrosine 26. The residue at position 31 (serine 31) is a Phosphoserine. Substrate is bound by residues arginine 62, glutamate 89–tyrosine 92, and lysine 100. Glutamate 89 (proton donor/acceptor) is an active-site residue. The residue at position 106 (lysine 106) is an N6-acetyllysine. Residue arginine 116–arginine 117 coordinates substrate. Serine 118 bears the Phosphoserine mark. A substrate-binding site is contributed by glycine 187–asparagine 188. An N6-acetyllysine; alternate modification is found at lysine 251. Lysine 251 is subject to N6-succinyllysine; alternate. N6-acetyllysine occurs at positions 253 and 254.

It belongs to the phosphoglycerate mutase family. BPG-dependent PGAM subfamily. Homodimer. Acetylated at Lys-253, Lys-253 and Lys-254 under high glucose condition. Acetylation increases catalytic activity. Under glucose restriction SIRT1 levels dramatically increase and it deacetylates the enzyme.

It carries out the reaction (2R)-2-phosphoglycerate = (2R)-3-phosphoglycerate. The enzyme catalyses (2R)-3-phospho-glyceroyl phosphate = (2R)-2,3-bisphosphoglycerate + H(+). Functionally, catalyzes the interconversion of 2-phosphoglycerate and 3-phosphoglyceratea crucial step in glycolysis, by using 2,3-bisphosphoglycerate. Also catalyzes the interconversion of (2R)-2,3-bisphosphoglycerate and (2R)-3-phospho-glyceroyl phosphate. The polypeptide is Phosphoglycerate mutase 1 (Mus musculus (Mouse)).